An 81-amino-acid polypeptide reads, in one-letter code: Cytochrome b559 subunit alpha (81 aa).

Residues 21–35 form a helical membrane-spanning segment; sequence VIHSITIPSLFVSGW. H23 serves as a coordination point for heme.

This sequence belongs to the PsbE/PsbF family. As to quaternary structure, heterodimer of an alpha subunit and a beta subunit. PSII is composed of 1 copy each of membrane proteins PsbA, PsbB, PsbC, PsbD, PsbE, PsbF, PsbH, PsbI, PsbJ, PsbK, PsbL, PsbM, PsbT, PsbX, PsbY, PsbZ, Psb30/Ycf12, at least 3 peripheral proteins of the oxygen-evolving complex and a large number of cofactors. It forms dimeric complexes. Heme b serves as cofactor.

It localises to the plastid. It is found in the chloroplast thylakoid membrane. Functionally, this b-type cytochrome is tightly associated with the reaction center of photosystem II (PSII). PSII is a light-driven water:plastoquinone oxidoreductase that uses light energy to abstract electrons from H(2)O, generating O(2) and a proton gradient subsequently used for ATP formation. It consists of a core antenna complex that captures photons, and an electron transfer chain that converts photonic excitation into a charge separation. The chain is Cytochrome b559 subunit alpha from Mesostigma viride (Green alga).